The primary structure comprises 321 residues: Epiphycan (321 aa).

The N-terminal stretch at 1–19 (MKALARLIVGLLILDAAVT) is a signal peptide. Thr-60 carries O-linked (GalNAc...) threonine glycosylation. An O-linked (Xyl...) (dermatan sulfate) serine glycan is attached at Ser-64. The segment at 64–100 (SGNRELLTPPPQPEEAEEEEEEESTPRLIDGSSPQEP) is disordered. The segment covering 77–86 (EEAEEEEEEE) has biased composition (acidic residues). O-linked (GalNAc...) serine glycosylation occurs at Ser-95. The 38-residue stretch at 105-142 (VLGPQTNEDFPTCLLCTCISTTVYCDDHELDAIPPLPK) folds into the LRRNT domain. A disulfide bond links Cys-117 and Cys-129. LRR repeat units follow at residues 143 to 164 (NTAYFYSRFNRIKKINKNDFAS), 167 to 188 (DLRRIDLTSNLISEIDEDAFRK), 191 to 212 (QLRELVLRDNKIRQLPELPTTL), 237 to 257 (DLHHLYLTDNNLDHIPLPLPE), and 258 to 279 (NLRALHLQNNNIMEMHEDTFCN). Cys-278 and Cys-311 are joined by a disulfide. The N-linked (GlcNAc...) asparagine glycan is linked to Asn-282. The stretch at 289-309 (ALEDIRLDGNPINLSKTPQAY) is one LRR 6 repeat.

Belongs to the small leucine-rich proteoglycan (SLRP) family. SLRP class III subfamily. Post-translationally, a long and a short form present in approximately equimolar amounts may arise by proteolysis or cleavage by exopeptidases. In terms of processing, the O-linked polysaccharides on Thr-60 and Ser-95 are probably the mucin type linked to GalNAc. There is one glycosaminoglycan chain, known to be dermatan sulfate, and it is probably the O-glycosylation at Ser-64. As to expression, preferentially expressed in the zone of flattened chondrocytes of the developing limb cartilage.

It localises to the secreted. The protein localises to the extracellular space. It is found in the extracellular matrix. Functionally, may have a role in bone formation and also in establishing the ordered structure of cartilage through matrix organization. The polypeptide is Epiphycan (EPYC) (Bos taurus (Bovine)).